The following is an 88-amino-acid chain: Putative regulatory protein Npun_R3866 (88 aa).

This sequence belongs to the RemA family.

The sequence is that of Putative regulatory protein Npun_R3866 from Nostoc punctiforme (strain ATCC 29133 / PCC 73102).